The chain runs to 170 residues: Cathelicidin antimicrobial peptide (170 aa).

An N-terminal signal peptide occupies residues 1–30; it reads MKTQRDGHSLGWWSLVLLLLGLVMPLAIIA. Positions 31-131 are cleaved as a propeptide — cathelin-like domain (CLD); the sequence is QVLSYKEAVL…DISCDKDNKR (101 aa). Disulfide bonds link C86/C97 and C108/C125. Residues 150–162 are active core; that stretch reads SKRIVQRIKDFLR.

It belongs to the cathelicidin family. In terms of assembly, monomer, homodimer or homotrimer (in vitro). Oligomerizes as tetra- or hexamer in solution (in vitro). Proteolytically cleaved by proteinase PRTN3 into antibacterial peptide LL-37. Proteolytically cleaved by cathepsin CTSG and neutrophil elastase ELANE. Post-translationally, resistant to proteolytic degradation in solution, and when bound to both zwitterionic (mimicking mammalian membranes) and negatively charged membranes (mimicking bacterial membranes). In terms of processing, after secretion onto the skin surface, the CAMP gene product is processed by a serine protease-dependent mechanism into multiple novel antimicrobial peptides distinct from and shorter than cathelicidin LL-37. These peptides show enhanced antimicrobial action, acquiring the ability to kill skin pathogens such as S.aureus, E.coli and C.albicans. These peptides have lost the ability to stimulate CXCL8/IL8 release from keratinocytes. The peptides act synergistically, killing bacteria at lower concentrations when present together, and maintain activity at increased salt condition.

The protein localises to the secreted. It localises to the vesicle. Functionally, antimicrobial protein that is an integral component of the innate immune system. Binds to bacterial lipopolysaccharides (LPS). Acts via neutrophil N-formyl peptide receptors to enhance the release of CXCL2. Postsecretory processing generates multiple cathelicidin antimicrobial peptides with various lengths which act as a topical antimicrobial defense in sweat on skin. The unprocessed precursor form, cathelicidin antimicrobial peptide, inhibits the growth of Gram-negative E.coli and E.aerogenes with efficiencies comparable to that of the mature peptide LL-37 (in vitro). Antimicrobial peptide that is an integral component of the innate immune system. Binds to bacterial lipopolysaccharides (LPS). Causes membrane permeabilization by forming transmembrane pores (in vitro). Causes lysis of E.coli. Exhibits antimicrobial activity against Gram-negative bacteria such as P.aeruginosa, S.typhimurium, E.aerogenes, E.coli and P.syringae, Gram-positive bacteria such as L.monocytogenes, S.epidermidis, S.pyogenes and S.aureus, as well as vancomycin-resistant enterococci (in vitro). Exhibits antimicrobial activity against methicillin-resistant S.aureus, P.mirabilis, and C.albicans in low-salt media, but not in media containing 100 mM NaCl (in vitro). Forms chiral supramolecular assemblies with quinolone signal (PQS) molecules of P.aeruginosa, which may lead to interference of bacterial quorum signaling and perturbance of bacterial biofilm formation. May form supramolecular fiber-like assemblies on bacterial membranes. Induces cytokine and chemokine producation as well as TNF/TNFA and CSF2/GMCSF production in normal human keratinocytes. Exhibits hemolytic activity against red blood cells. In terms of biological role, exhibits antimicrobial activity against E.coli and B.megaterium (in vitro). This is Cathelicidin antimicrobial peptide from Gorilla gorilla gorilla (Western lowland gorilla).